The chain runs to 271 residues: N-acylmannosamine 1-dehydrogenase (271 aa).

20-44 (VTGAAGGIGRATVEAYLREGASVVA) provides a ligand contact to NAD(+). S153 lines the substrate pocket. The active-site Proton acceptor is Y166.

Belongs to the short-chain dehydrogenases/reductases (SDR) family.

It carries out the reaction an N-acyl-D-mannosamine + NAD(+) = an N-acyl-D-mannosaminolactone + NADH + H(+). Acts on acetyl-D-mannosamine and glycolyl-D-mannosamine. The protein is N-acylmannosamine 1-dehydrogenase of Flavobacterium sp. (strain 141-8).